The sequence spans 237 residues: Ubiquinone biosynthesis O-methyltransferase (237 aa).

R38, G58, D79, and M124 together coordinate S-adenosyl-L-methionine.

This sequence belongs to the methyltransferase superfamily. UbiG/COQ3 family.

It carries out the reaction a 3-demethylubiquinol + S-adenosyl-L-methionine = a ubiquinol + S-adenosyl-L-homocysteine + H(+). The catalysed reaction is a 3-(all-trans-polyprenyl)benzene-1,2-diol + S-adenosyl-L-methionine = a 2-methoxy-6-(all-trans-polyprenyl)phenol + S-adenosyl-L-homocysteine + H(+). The protein operates within cofactor biosynthesis; ubiquinone biosynthesis. Its function is as follows. O-methyltransferase that catalyzes the 2 O-methylation steps in the ubiquinone biosynthetic pathway. The sequence is that of Ubiquinone biosynthesis O-methyltransferase from Acinetobacter baumannii (strain SDF).